The following is a 335-amino-acid chain: (+)-caryolan-1-ol synthase (335 aa).

Residues Asp83, Asp87, Asn220, Ser224, and Glu228 each coordinate Mg(2+). Residues 83–87 (DDEFD) carry the DDXXD motif motif. The NSE/DTE motif signature appears at 220-228 (NDICSFEKE).

This sequence belongs to the terpene synthase family. Mg(2+) serves as cofactor. It depends on Mn(2+) as a cofactor.

The catalysed reaction is (2E,6E)-farnesyl diphosphate = (+)-(E)-beta-caryophyllene + diphosphate. The enzyme catalyses (+)-(E)-beta-caryophyllene + H2O = (+)-caryolan-1-ol. It participates in secondary metabolite biosynthesis; terpenoid biosynthesis. Sesquiterpene cyclase that first catalyzes the cyclization of farnesyl diphosphate (FPP) to the bicyclic sesquiterpene (+)-beta-caryophyllene intermediate, and then its conversion to (+)-caryolan-1-ol via a second cyclization and the addition of a water molecule. This is (+)-caryolan-1-ol synthase (gcoA) from Streptomyces griseus subsp. griseus (strain JCM 4626 / CBS 651.72 / NBRC 13350 / KCC S-0626 / ISP 5235).